A 216-amino-acid polypeptide reads, in one-letter code: Somatotropin (216 aa).

An N-terminal signal peptide occupies residues 1 to 25; it reads MAPGSWFSPLLIAVVTLGLPQGAAA. His45 serves as a coordination point for Zn(2+). A disulfide bond links Cys78 and Cys189. Glu198 contributes to the Zn(2+) binding site. Cysteines 206 and 214 form a disulfide.

The protein belongs to the somatotropin/prolactin family. As to expression, pituitary gland.

It is found in the secreted. In terms of biological role, growth hormone plays an important role in growth control. The polypeptide is Somatotropin (GH) (Meleagris gallopavo (Wild turkey)).